A 131-amino-acid chain; its full sequence is Profilin (131 aa).

The protein belongs to the profilin family. In terms of assembly, occurs in many kinds of cells as a complex with monomeric actin in a 1:1 ratio.

Its subcellular location is the cytoplasm. The protein localises to the cytoskeleton. Functionally, binds to actin and affects the structure of the cytoskeleton. At high concentrations, profilin prevents the polymerization of actin, whereas it enhances it at low concentrations. By binding to PIP2, it inhibits the formation of IP3 and DG. This Arachis hypogaea (Peanut) protein is Profilin.